The chain runs to 203 residues: MASNTLIESTSLRRSPAEHLAEAMAQGSTAGAVVLREIAFATQVGVRAVPGSAGHAALAAALGTGLPQQVGEVAGAAEGTAVLWLGPDEFLAIAPEGSGLAGELVAALGGEPGQVIDLSANRSVLELSGPAAPLVLRKSCPADLHPRAFGVNRAIATTLANIPVLLWRTGEQSWYVLPRVFFTEHTVHWLIDAMTEFASPTVA.

Belongs to the SoxG family. Heterotetramer composed of subunits alpha (SoxA), beta (SoxB), gamma (SoxG) and delta (SoxD).

The protein resides in the cytoplasm. It catalyses the reaction sarcosine + (6S)-5,6,7,8-tetrahydrofolate + O2 = (6R)-5,10-methylene-5,6,7,8-tetrahydrofolate + glycine + H2O2. It carries out the reaction sarcosine + O2 + H2O = formaldehyde + glycine + H2O2. In terms of biological role, in the presence of tetrahydrofolate, catalyzes the oxidative demethylation of sarcosine to yield glycine, 5,10-methylenetetrahydrofolate and hydrogen peroxide. In the absence of tetrahydrofolate, catalyzes the oxidative demethylation of sarcosine to yield glycine, formaldehyde and hydrogen peroxide. This chain is Sarcosine oxidase subunit gamma (soxG), found in Arthrobacter sp.